The primary structure comprises 210 residues: Proteasome subunit beta (210 aa).

The propeptide at 1 to 9 (MDNDKHLKG) is removed in mature form; by autocatalysis. Threonine 10 functions as the Nucleophile in the catalytic mechanism.

It belongs to the peptidase T1B family. As to quaternary structure, the 20S proteasome core is composed of 14 alpha and 14 beta subunits that assemble into four stacked heptameric rings, resulting in a barrel-shaped structure. The two inner rings, each composed of seven catalytic beta subunits, are sandwiched by two outer rings, each composed of seven alpha subunits. The catalytic chamber with the active sites is on the inside of the barrel. Has a gated structure, the ends of the cylinder being occluded by the N-termini of the alpha-subunits. Is capped at one or both ends by the proteasome regulatory ATPase, PAN.

It localises to the cytoplasm. The catalysed reaction is Cleavage of peptide bonds with very broad specificity.. Its activity is regulated as follows. The formation of the proteasomal ATPase PAN-20S proteasome complex, via the docking of the C-termini of PAN into the intersubunit pockets in the alpha-rings, triggers opening of the gate for substrate entry. Interconversion between the open-gate and close-gate conformations leads to a dynamic regulation of the 20S proteasome proteolysis activity. Component of the proteasome core, a large protease complex with broad specificity involved in protein degradation. This is Proteasome subunit beta from Methanohalophilus mahii (strain ATCC 35705 / DSM 5219 / SLP).